The following is a 388-amino-acid chain: Succinate--CoA ligase [ADP-forming] subunit beta (388 aa).

The ATP-grasp domain maps to lysine 9–glutamate 244. ATP-binding positions include lysine 46, glycine 53–glycine 55, glutamate 99, cysteine 102, and glutamate 107. Positions 199 and 213 each coordinate Mg(2+). Residues asparagine 264 and glycine 321–methionine 323 contribute to the substrate site.

This sequence belongs to the succinate/malate CoA ligase beta subunit family. In terms of assembly, heterotetramer of two alpha and two beta subunits. It depends on Mg(2+) as a cofactor.

It carries out the reaction succinate + ATP + CoA = succinyl-CoA + ADP + phosphate. The enzyme catalyses GTP + succinate + CoA = succinyl-CoA + GDP + phosphate. It participates in carbohydrate metabolism; tricarboxylic acid cycle; succinate from succinyl-CoA (ligase route): step 1/1. In terms of biological role, succinyl-CoA synthetase functions in the citric acid cycle (TCA), coupling the hydrolysis of succinyl-CoA to the synthesis of either ATP or GTP and thus represents the only step of substrate-level phosphorylation in the TCA. The beta subunit provides nucleotide specificity of the enzyme and binds the substrate succinate, while the binding sites for coenzyme A and phosphate are found in the alpha subunit. This chain is Succinate--CoA ligase [ADP-forming] subunit beta, found in Staphylococcus aureus (strain bovine RF122 / ET3-1).